A 367-amino-acid chain; its full sequence is Membrane-bound lytic murein transglycosylase C (367 aa).

Residues 1–19 form the signal peptide; that stretch reads MRKYAKYLPFCLVVPFLAA. A lipid anchor (N-palmitoyl cysteine) is attached at Cys20. Residue Cys20 is the site of S-diacylglycerol cysteine attachment.

The protein belongs to the transglycosylase Slt family.

The protein localises to the cell outer membrane. It carries out the reaction Exolytic cleavage of the (1-&gt;4)-beta-glycosidic linkage between N-acetylmuramic acid (MurNAc) and N-acetylglucosamine (GlcNAc) residues in peptidoglycan, from either the reducing or the non-reducing ends of the peptidoglycan chains, with concomitant formation of a 1,6-anhydrobond in the MurNAc residue.. In terms of biological role, murein-degrading enzyme. May play a role in recycling of muropeptides during cell elongation and/or cell division. This chain is Membrane-bound lytic murein transglycosylase C, found in Haemophilus ducreyi (strain 35000HP / ATCC 700724).